The sequence spans 804 residues: Endoplasmin (804 aa).

A signal peptide spans 1–21 (MRVLWVLGLCCVLLTFGFVRA). Positions 42 to 44 (SRT) match the SRT pseudosubstrate motif motif. Asn62 carries N-linked (GlcNAc...) asparagine glycosylation. At Ser64 the chain carries Phosphoserine. Residue Asn107 is glycosylated (N-linked (GlcNAc...) asparagine). 3 residues coordinate ATP: Asn107, Asp149, and Asn162. Lys168 is subject to N6-(2-hydroxyisobutyryl)lysine. Phosphoserine is present on Ser172. Phe199 contributes to the ATP binding site. Asn217 carries an N-linked (GlcNAc...) asparagine glycan. Positions 288 to 323 (TVEEPLEEDETAQEEKEEADDEAAVEEEEEEKKPKT) are disordered. Residues 289–317 (VEEPLEEDETAQEEKEEADDEAAVEEEEE) show a composition bias toward acidic residues. The residue at position 403 (Ser403) is a Phosphoserine. Residue Lys404 is modified to N6-succinyllysine. N-linked (GlcNAc...) asparagine glycosylation is present at Asn445. Ser447 carries the phosphoserine modification. N6-acetyllysine is present on Lys479. Asn481 and Asn502 each carry an N-linked (GlcNAc...) asparagine glycan. Lys633 is modified (N6-succinyllysine). The tract at residues 749 to 804 (IDPEAQVEEEPEEEPEDTTEDTTDDSEQDEEETDAGAEEEEEEQETEKEPTEKDEL) is disordered. The segment covering 753 to 794 (AQVEEEPEEEPEDTTEDTTDDSEQDEEETDAGAEEEEEEQET) has biased composition (acidic residues). Basic and acidic residues predominate over residues 795-804 (EKEPTEKDEL). A Prevents secretion from ER motif is present at residues 801 to 804 (KDEL).

The protein belongs to the heat shock protein 90 family. In terms of assembly, homodimer; disulfide-linked. Component of an EIF2 complex at least composed of CELF1/CUGBP1, CALR, CALR3, EIF2S1, EIF2S2, HSP90B1 and HSPA5. Part of a large chaperone multiprotein complex comprising DNAJB11, HSP90B1, HSPA5, HYOU, PDIA2, PDIA4, PDIA6, PPIB, SDF2L1, UGGT1 and very small amounts of ERP29, but not, or at very low levels, CALR nor CANX. Interacts with AIMP1; regulates its retention in the endoplasmic reticulum. Hyperglycosylated form interacts with OS9; promoting its degradation by the endoplasmic reticulum associated degradation (ERAD). Interacts with CNPY3. This interaction is disrupted in the presence of ATP. Interacts with TLR4 and TLR9, but not with TLR3. Interacts with MZB1 in a calcium-dependent manner. Interacts with METTL23. Interacts with IL1B; the interaction facilitates cargo translocation into the ERGIC. Interacts with EIF2AK3. Post-translationally, phosphorylated by CK2. N-glycosylated cotranslationally at Asn-217 by STT3A-containing OST-A complex: this glycosylation is constitutive. In response to various stress, 5 additional facultative sites (Asn-62, Asn-107, Asn-445, Asn-481 and Asn-502) can be glycosylated post-translationally by STT3B-containing OST-B complex, leading to a hyperglycosylated form that is degraded by the ER-associated degradation (ERAD) pathway. In normal conditions, the OST-A complex together with CCDC134 prevent glycosylation at facultative sites during protein folding, thereby preventing hyperglycosylation. Mechanistically, nascent HSP90B1 is tethered during translation to a specialized CCDC134-containing translocon that forms a microenvironment for its folding, in which STT3A associates with the SRT pseudosubstrate motif, and prevents access to facultative glycosylation sites until folding is completed, rendering its facultative sites inaccessible to the OST-B complex.

The protein localises to the endoplasmic reticulum lumen. The protein resides in the sarcoplasmic reticulum lumen. It is found in the melanosome. The enzyme catalyses ATP + H2O = ADP + phosphate + H(+). ATP-dependent chaperone involved in the processing of proteins in the endoplasmic reticulum, regulating their transport. Together with MESD, acts as a modulator of the Wnt pathway by promoting the folding of LRP6, a coreceptor of the canonical Wnt pathway. When associated with CNPY3, required for proper folding of Toll-like receptors. Promotes folding and trafficking of TLR4 to the cell surface. May participate in the unfolding of cytosolic leaderless cargos (lacking the secretion signal sequence) such as the interleukin 1/IL-1 to facilitate their translocation into the ERGIC (endoplasmic reticulum-Golgi intermediate compartment) and secretion; the translocation process is mediated by the cargo receptor TMED10. This is Endoplasmin from Rattus norvegicus (Rat).